We begin with the raw amino-acid sequence, 300 residues long: Delta-9 desaturase-like 4 protein (300 aa).

The next 2 helical transmembrane spans lie at 39-59 (VVVI…WEAL) and 61-81 (FGLV…HRNL). The Histidine box-1 motif lies at 78–83 (HRNLSH). The Histidine box-2 signature appears at 115-119 (HRFHH). 2 consecutive transmembrane segments (helical) span residues 175–195 (IAVH…LPYL) and 200–220 (GVGI…CHIW). A Histidine box-3 motif is present at residues 247 to 251 (HNNHH).

This sequence belongs to the fatty acid desaturase type 1 family. It depends on Fe cation as a cofactor.

The protein resides in the endoplasmic reticulum membrane. Its pathway is lipid metabolism; polyunsaturated fatty acid biosynthesis. The chain is Delta-9 desaturase-like 4 protein from Arabidopsis thaliana (Mouse-ear cress).